The primary structure comprises 339 residues: Adenosine deaminase (339 aa).

2 residues coordinate Zn(2+): H15 and H17. Residues H17, D19, and G172 each contribute to the substrate site. H199 is a binding site for Zn(2+). E202 serves as the catalytic Proton donor. A Zn(2+)-binding site is contributed by D279.

Belongs to the metallo-dependent hydrolases superfamily. Adenosine and AMP deaminases family. Adenosine deaminase subfamily. The cofactor is Zn(2+).

The enzyme catalyses adenosine + H2O + H(+) = inosine + NH4(+). It carries out the reaction 2'-deoxyadenosine + H2O + H(+) = 2'-deoxyinosine + NH4(+). Functionally, catalyzes the hydrolytic deamination of adenosine and 2-deoxyadenosine. In Lacticaseibacillus casei (strain BL23) (Lactobacillus casei), this protein is Adenosine deaminase.